The chain runs to 294 residues: NAD kinase (294 aa).

The Proton acceptor role is filled by Asp-74. NAD(+)-binding positions include 74-75 (DG), Arg-79, 149-150 (NE), Asp-179, 190-195 (TGYSLS), and Ala-214.

The protein belongs to the NAD kinase family. The cofactor is a divalent metal cation.

It localises to the cytoplasm. The catalysed reaction is NAD(+) + ATP = ADP + NADP(+) + H(+). Functionally, involved in the regulation of the intracellular balance of NAD and NADP, and is a key enzyme in the biosynthesis of NADP. Catalyzes specifically the phosphorylation on 2'-hydroxyl of the adenosine moiety of NAD to yield NADP. The sequence is that of NAD kinase from Flavobacterium johnsoniae (strain ATCC 17061 / DSM 2064 / JCM 8514 / BCRC 14874 / CCUG 350202 / NBRC 14942 / NCIMB 11054 / UW101) (Cytophaga johnsonae).